Consider the following 27-residue polypeptide: Ganodermin (27 aa).

Its function is as follows. Has antifungal activity against B.cinera, F.oxysporum and P.piricola with IC(50) values of 15.2 uM, 12.4 uM and 18.1 uM, respectively. Lacks hemagglutinating activity towards rabbit erythrocytes. Lacks deoxyribonuclease, ribonuclease and protease inhibitory activities. The sequence is that of Ganodermin from Ganoderma lucidum (Ling zhi medicinal fungus).